We begin with the raw amino-acid sequence, 325 residues long: S-adenosylmethionine carrier 1, chloroplastic/mitochondrial (325 aa).

Residues 1–38 constitute a chloroplast and mitochondrion transit peptide; the sequence is MAPLTLSVDVKSSSATSHDVSKRVMQSSQLKINKGFFA. Solcar repeat units lie at residues 52 to 124, 133 to 215, and 228 to 310; these read RTLF…TKQK, LSAV…LCLG, and ENAL…TKRT. Transmembrane regions (helical) follow at residues 55 to 75, 97 to 117, 132 to 152, 230 to 250, and 285 to 305; these read FEGFIAGGTAGVVVETALYPI, YSGLAGNIAGVLPASALFVGV, HLSAVAHLTAGAIGGLAASLI, ALIGAFAGALTGAVTTPLDVI, and GIGPRVLWIGIGGSIFFGVLE.

It belongs to the mitochondrial carrier (TC 2.A.29) family. In terms of tissue distribution, expressed in seedlings, cotyledons, leaves and flowers. Lower levels of expression in stems and roots. Not detected in senescent leaves, petals and pollen grains.

The protein resides in the mitochondrion membrane. It localises to the plastid. Its subcellular location is the chloroplast membrane. Its activity is regulated as follows. Inhibited strongly by tannic acid, bromocresol purple, mercuric chloride, mersalyl, p-hydroxymercuribenzoate, S-adenosylhomocysteine, S-adenosylcysteine and adenosylornithine, and to a lesser extent by N-ethylmaleimide, bathophenanthroline and pyridoxal-5'-P. In terms of biological role, transporter involved in exchange reactions through membranes. Has a low uniporter activity. Specifically mediates the transport of S-adenosylmethionine (SAM) and its closest analogs. Probably involved in the uptake of SAM in exchange for S-adenosylhomocysteine (SAHC), which is produced from SAM in the mitochondrial matrix and plastidial stroma by methyltransferase activities. The sequence is that of S-adenosylmethionine carrier 1, chloroplastic/mitochondrial (SAMC1) from Arabidopsis thaliana (Mouse-ear cress).